The following is a 362-amino-acid chain: Glutaminyl-peptide cyclotransferase (362 aa).

A signal peptide spans 1–35; that stretch reads MAGSEDKRVVGTLHLLLLQATVLSLTAGNLSLVSA. N-linked (GlcNAc...) asparagine glycosylation is found at Asn29 and Asn50. Cys140 and Cys165 are disulfide-bonded. Residue Asp160 coordinates Zn(2+). Glu202 serves as the catalytic Proton acceptor. Glu203 is a binding site for Zn(2+). Asp249 functions as the Proton acceptor in the catalytic mechanism. His331 is a Zn(2+) binding site.

Belongs to the glutaminyl-peptide cyclotransferase family.

It localises to the secreted. It catalyses the reaction N-terminal L-glutaminyl-[peptide] = N-terminal 5-oxo-L-prolyl-[peptide] + NH4(+). Functionally, responsible for the biosynthesis of pyroglutamyl peptides. Has a bias against acidic and tryptophan residues adjacent to the N-terminal glutaminyl residue and a lack of importance of chain length after the second residue. The chain is Glutaminyl-peptide cyclotransferase (Qpct) from Mus musculus (Mouse).